Reading from the N-terminus, the 336-residue chain is DNA repair protein Rad51 homolog (336 aa).

Residues 1-10 (MEKLTNVQAQ) are compositionally biased toward polar residues. Residues 1–20 (MEKLTNVQAQQEEEEEEGPL) form a disordered region. ATP is bound at residue 124–131 (GEFRCGKT).

Belongs to the RecA family. RAD51 subfamily. In terms of assembly, interacts with Rrp6; the interaction is required for the recruitment of spn-A to the DNA-damage response foci. In terms of tissue distribution, highly expressed in ovaries.

It is found in the nucleus. The protein localises to the cytoplasm. Plays an important role in homologous strand exchange, a key step in DNA repair through homologous recombination (HR). Binds to single and double-stranded DNA and exhibits DNA-dependent ATPase activity. Underwinds duplex DNA. Spindle genes are required for each of the symmetry-breaking steps that generate polarity during egg axis formation; oocyte positioning at the posterior of the cyst to generate the first AP polarity and inhibition of gurken (grk) signaling to the follicle cell layer to polarize first the AP axis and then DV axis. May have a role in female meiosis. This is DNA repair protein Rad51 homolog (spn-A) from Drosophila melanogaster (Fruit fly).